A 181-amino-acid polypeptide reads, in one-letter code: Ribulose bisphosphate carboxylase small subunit, chloroplastic (181 aa).

The transit peptide at 1–54 (MASSMLSSAAVVTSQLQATMVAPFTGLKSSAAFPVTRKTNTDITSIASNGGRVS) directs the protein to the chloroplast.

Belongs to the RuBisCO small chain family. In terms of assembly, heterohexadecamer of 8 large and 8 small subunits.

Its subcellular location is the plastid. The protein localises to the chloroplast. Its function is as follows. RuBisCO catalyzes two reactions: the carboxylation of D-ribulose 1,5-bisphosphate, the primary event in carbon dioxide fixation, as well as the oxidative fragmentation of the pentose substrate. Both reactions occur simultaneously and in competition at the same active site. Although the small subunit is not catalytic it is essential for maximal activity. This chain is Ribulose bisphosphate carboxylase small subunit, chloroplastic, found in Raphanus sativus (Radish).